A 146-amino-acid polypeptide reads, in one-letter code: Hemoglobin subunit beta (146 aa).

Position 1 is an N-acetylvaline (Val-1). The Globin domain occupies 2–146; the sequence is HLTAEEKSAV…VANALAHKYH (145 aa). Ser-44 is modified (phosphoserine). Lys-59 carries the post-translational modification N6-acetyllysine. Residue His-63 participates in heme b binding. N6-acetyllysine is present on Lys-82. His-92 is a binding site for heme b. Cys-93 bears the S-nitrosocysteine mark. An N6-acetyllysine modification is found at Lys-144.

Belongs to the globin family. As to quaternary structure, heterotetramer of two alpha chains and two beta chains. Red blood cells.

Involved in oxygen transport from the lung to the various peripheral tissues. In Tamias merriami (Merriam's chipmunk), this protein is Hemoglobin subunit beta.